The primary structure comprises 104 residues: Phosphoribosyl-ATP pyrophosphatase (104 aa).

It belongs to the PRA-PH family.

Its subcellular location is the cytoplasm. The catalysed reaction is 1-(5-phospho-beta-D-ribosyl)-ATP + H2O = 1-(5-phospho-beta-D-ribosyl)-5'-AMP + diphosphate + H(+). The protein operates within amino-acid biosynthesis; L-histidine biosynthesis; L-histidine from 5-phospho-alpha-D-ribose 1-diphosphate: step 2/9. The polypeptide is Phosphoribosyl-ATP pyrophosphatase (Erythrobacter litoralis (strain HTCC2594)).